Consider the following 179-residue polypeptide: Lipoprotein signal peptidase (179 aa).

4 helical membrane passes run L10–I30, V48–F68, W75–L95, and N101–I121. Catalysis depends on residues D131 and D149. A helical transmembrane segment spans residues H141–I161.

This sequence belongs to the peptidase A8 family.

Its subcellular location is the cell inner membrane. The enzyme catalyses Release of signal peptides from bacterial membrane prolipoproteins. Hydrolyzes -Xaa-Yaa-Zaa-|-(S,diacylglyceryl)Cys-, in which Xaa is hydrophobic (preferably Leu), and Yaa (Ala or Ser) and Zaa (Gly or Ala) have small, neutral side chains.. The protein operates within protein modification; lipoprotein biosynthesis (signal peptide cleavage). Functionally, this protein specifically catalyzes the removal of signal peptides from prolipoproteins. In Acinetobacter baylyi (strain ATCC 33305 / BD413 / ADP1), this protein is Lipoprotein signal peptidase.